The chain runs to 189 residues: Elongation factor P (189 aa).

At Lys34 the chain carries N6-(3,6-diaminohexanoyl)-5-hydroxylysine.

Belongs to the elongation factor P family. Post-translationally, may be beta-lysylated on the epsilon-amino group of Lys-34 by the combined action of EpmA and EpmB, and then hydroxylated on the C5 position of the same residue by EpmC (if this protein is present). Lysylation is critical for the stimulatory effect of EF-P on peptide-bond formation. The lysylation moiety may extend toward the peptidyltransferase center and stabilize the terminal 3-CCA end of the tRNA. Hydroxylation of the C5 position on Lys-34 may allow additional potential stabilizing hydrogen-bond interactions with the P-tRNA.

The protein resides in the cytoplasm. Its pathway is protein biosynthesis; polypeptide chain elongation. Involved in peptide bond synthesis. Alleviates ribosome stalling that occurs when 3 or more consecutive Pro residues or the sequence PPG is present in a protein, possibly by augmenting the peptidyl transferase activity of the ribosome. Modification of Lys-34 is required for alleviation. The protein is Elongation factor P of Legionella pneumophila (strain Paris).